The primary structure comprises 79 residues: Translational regulator CsrA (79 aa).

This sequence belongs to the CsrA/RsmA family. In terms of assembly, homodimer; the beta-strands of each monomer intercalate to form a hydrophobic core, while the alpha-helices form wings that extend away from the core.

The protein localises to the cytoplasm. A translational regulator that binds mRNA to regulate translation initiation and/or mRNA stability. Usually binds in the 5'-UTR at or near the Shine-Dalgarno sequence preventing ribosome-binding, thus repressing translation. Its main target seems to be the major flagellin gene, while its function is anatagonized by FliW. This chain is Translational regulator CsrA, found in Solidesulfovibrio magneticus (strain ATCC 700980 / DSM 13731 / RS-1) (Desulfovibrio magneticus).